We begin with the raw amino-acid sequence, 429 residues long: Glutamate-1-semialdehyde 2,1-aminomutase 1 (429 aa).

Lys268 carries the post-translational modification N6-(pyridoxal phosphate)lysine.

Belongs to the class-III pyridoxal-phosphate-dependent aminotransferase family. HemL subfamily. Homodimer. Requires pyridoxal 5'-phosphate as cofactor.

The protein localises to the cytoplasm. It catalyses the reaction (S)-4-amino-5-oxopentanoate = 5-aminolevulinate. Its pathway is porphyrin-containing compound metabolism; protoporphyrin-IX biosynthesis; 5-aminolevulinate from L-glutamyl-tRNA(Glu): step 2/2. In Lysinibacillus sphaericus (strain C3-41), this protein is Glutamate-1-semialdehyde 2,1-aminomutase 1.